Here is a 129-residue protein sequence, read N- to C-terminus: UPF0102 protein Clim_0016 (129 aa).

It belongs to the UPF0102 family.

In Chlorobium limicola (strain DSM 245 / NBRC 103803 / 6330), this protein is UPF0102 protein Clim_0016.